We begin with the raw amino-acid sequence, 180 residues long: Ribosome maturation factor RimM (180 aa).

Residues 97–176 enclose the PRC barrel domain; the sequence is EGEFFYCDLI…KITTNNAKTL (80 aa).

The protein belongs to the RimM family. As to quaternary structure, binds ribosomal protein uS19.

The protein localises to the cytoplasm. In terms of biological role, an accessory protein needed during the final step in the assembly of 30S ribosomal subunit, possibly for assembly of the head region. Essential for efficient processing of 16S rRNA. May be needed both before and after RbfA during the maturation of 16S rRNA. It has affinity for free ribosomal 30S subunits but not for 70S ribosomes. This is Ribosome maturation factor RimM from Helicobacter acinonychis (strain Sheeba).